Here is a 507-residue protein sequence, read N- to C-terminus: ATP synthase subunit alpha, chloroplastic (507 aa).

170-177 (GDRQTGKT) serves as a coordination point for ATP.

This sequence belongs to the ATPase alpha/beta chains family. As to quaternary structure, F-type ATPases have 2 components, CF(1) - the catalytic core - and CF(0) - the membrane proton channel. CF(1) has five subunits: alpha(3), beta(3), gamma(1), delta(1), epsilon(1). CF(0) has four main subunits: a, b, b' and c.

It is found in the plastid. The protein localises to the chloroplast thylakoid membrane. The enzyme catalyses ATP + H2O + 4 H(+)(in) = ADP + phosphate + 5 H(+)(out). Functionally, produces ATP from ADP in the presence of a proton gradient across the membrane. The alpha chain is a regulatory subunit. This chain is ATP synthase subunit alpha, chloroplastic, found in Drimys granadensis.